The following is a 122-amino-acid chain: SLLQFNKMIKFETRKNAVPFYAFYGCYCGWGGRRRPKDATDRCCFVHDCCYEKVTKCNTKWDIYRYSLKSGYITCGKGTWCKEQICECDRVAAECLRRSLSTYKNGYMFYPDSRCRGPSETC.

7 disulfide bridges follow: Cys-26–Cys-115, Cys-28–Cys-44, Cys-43–Cys-95, Cys-49–Cys-122, Cys-50–Cys-88, Cys-57–Cys-81, and Cys-75–Cys-86. Residues Tyr-27, Gly-29, and Gly-31 each coordinate Ca(2+). The active site involves His-47. Asp-48 provides a ligand contact to Ca(2+). Residue Asp-89 is part of the active site.

It belongs to the phospholipase A2 family. Group II subfamily. D49 sub-subfamily. The cofactor is Ca(2+). In terms of tissue distribution, expressed by the venom gland.

The protein localises to the secreted. It carries out the reaction a 1,2-diacyl-sn-glycero-3-phosphocholine + H2O = a 1-acyl-sn-glycero-3-phosphocholine + a fatty acid + H(+). Its activity is regulated as follows. Pre-incubation with heparin markedly reduces the neurotoxicity of this toxin. In terms of biological role, snake venom phospholipase A2 (PLA2) that produces neuromuscular blockade in chick biventer cervicis preparations in the absence and presence of crotapotin. In contrast, in mouse phrenic nerve-diaphragm preparations, the neuromuscular blockade is dependent on crotapotin. PLA2 catalyzes the calcium-dependent hydrolysis of the 2-acyl groups in 3-sn-phosphoglycerides. This chain is Basic phospholipase A2 F16, found in Crotalus durissus terrificus (South American rattlesnake).